The primary structure comprises 142 residues: Large ribosomal subunit protein uL13 (142 aa).

The protein belongs to the universal ribosomal protein uL13 family. In terms of assembly, part of the 50S ribosomal subunit.

Its function is as follows. This protein is one of the early assembly proteins of the 50S ribosomal subunit, although it is not seen to bind rRNA by itself. It is important during the early stages of 50S assembly. The chain is Large ribosomal subunit protein uL13 from Acidovorax sp. (strain JS42).